The following is a 184-amino-acid chain: Major urinary protein 3 (184 aa).

An N-terminal signal peptide occupies residues 1 to 22 (MKLLLPLLLLLCLELTLVCIHA). A glycan (N-linked (GlcNAc...) asparagine) is linked at N66. C86 and C179 are oxidised to a cystine.

It belongs to the calycin superfamily. Lipocalin family. Post-translationally, glycosylated. As to expression, abundant in the urine of adult male mice but absent from that of females.

Its subcellular location is the secreted. Functionally, binds pheromones that are released from drying urine of males. These pheromones affect the sexual behavior of females. This is Major urinary protein 3 (Mup3) from Mus musculus (Mouse).